Here is a 338-residue protein sequence, read N- to C-terminus: Mitochondrial E3 ubiquitin protein ligase 1 (338 aa).

Residues Met1–Phe3 lie on the Cytoplasmic side of the membrane. A helical membrane pass occupies residues Leu4–Tyr24. The Mitochondrial intermembrane portion of the chain corresponds to Val25–Thr227. A helical membrane pass occupies residues Thr228–Ala248. The Cytoplasmic segment spans residues Lys249–Ala338. The RING-type zinc-finger motif lies at Cys290 to Arg326.

As to quaternary structure, interacts with Marf. Post-translationally, auto-ubiquitinated.

It localises to the mitochondrion outer membrane. The catalysed reaction is S-ubiquitinyl-[E2 ubiquitin-conjugating enzyme]-L-cysteine + [acceptor protein]-L-lysine = [E2 ubiquitin-conjugating enzyme]-L-cysteine + N(6)-ubiquitinyl-[acceptor protein]-L-lysine.. Its function is as follows. Exhibits weak E3 ubiquitin-protein ligase activity. E3 ubiquitin ligases accept ubiquitin from an E2 ubiquitin-conjugating enzyme in the form of a thioester and then directly transfer the ubiquitin to targeted substrates. Plays a role in the control of mitochondrial morphology by promoting mitochondrial fission. Negatively regulates the mitochondrial fusion protein marf by promoting its ubiquitination, acting in a pathway that is parallel to the park/pink1 regulatory pathway. The sequence is that of Mitochondrial E3 ubiquitin protein ligase 1 from Drosophila melanogaster (Fruit fly).